A 60-amino-acid polypeptide reads, in one-letter code: Large ribosomal subunit protein uL30 (60 aa).

Belongs to the universal ribosomal protein uL30 family. In terms of assembly, part of the 50S ribosomal subunit.

The sequence is that of Large ribosomal subunit protein uL30 from Shewanella sp. (strain MR-7).